Consider the following 117-residue polypeptide: Ig heavy chain V region MOO (117 aa).

The Ig-like domain maps to 1 to 116 (EVKLVESGGD…FGQGTIVTVS (116 aa)).

In Canis lupus familiaris (Dog), this protein is Ig heavy chain V region MOO.